Reading from the N-terminus, the 354-residue chain is 3-isopropylmalate dehydrogenase (354 aa).

An NAD(+)-binding site is contributed by Gly74–Glu87. 4 residues coordinate substrate: Arg95, Arg105, Arg134, and Asp219. Mg(2+)-binding residues include Asp219, Asp243, and Asp247. Gly275–Asn287 is a binding site for NAD(+).

Belongs to the isocitrate and isopropylmalate dehydrogenases family. LeuB type 1 subfamily. Homodimer. Requires Mg(2+) as cofactor. Mn(2+) is required as a cofactor.

It is found in the cytoplasm. The catalysed reaction is (2R,3S)-3-isopropylmalate + NAD(+) = 4-methyl-2-oxopentanoate + CO2 + NADH. Its pathway is amino-acid biosynthesis; L-leucine biosynthesis; L-leucine from 3-methyl-2-oxobutanoate: step 3/4. In terms of biological role, catalyzes the oxidation of 3-carboxy-2-hydroxy-4-methylpentanoate (3-isopropylmalate) to 3-carboxy-4-methyl-2-oxopentanoate. The product decarboxylates to 4-methyl-2 oxopentanoate. The chain is 3-isopropylmalate dehydrogenase (leuB) from Thermotoga maritima (strain ATCC 43589 / DSM 3109 / JCM 10099 / NBRC 100826 / MSB8).